Here is a 437-residue protein sequence, read N- to C-terminus: tRNA-queuosine alpha-mannosyltransferase (437 aa).

This sequence belongs to the glycosyltransferase group 1 family. Glycosyltransferase 4 subfamily.

It is found in the cytoplasm. Its subcellular location is the nucleus. The catalysed reaction is queuosine(34) in tRNA(Asp) + GDP-alpha-D-mannose = O-4''-alpha-D-mannosylqueuosine(34) in tRNA(Asp) + GDP + H(+). Glycosyltransferase that specifically catalyzes mannosylation of cytoplasmic tRNA(Asp) modified with queuosine at position 34 (queuosine(34)). Mannosylates the cyclopentene moiety of queuosine(34) in tRNA(Asp) to form mannosyl-queuosine(34). Mannosylation of queuosine(34) in tRNA(Asp) is required to slow-down elongation at cognate codons, GAC and GAU, thereby regulating protein translation. This chain is tRNA-queuosine alpha-mannosyltransferase (gtdc1), found in Xenopus tropicalis (Western clawed frog).